Consider the following 760-residue polypeptide: Xaa-Pro dipeptidyl-peptidase (760 aa).

Catalysis depends on charge relay system residues Ser-349, Asp-469, and His-499.

It belongs to the peptidase S15 family. In terms of assembly, homodimer.

It localises to the cytoplasm. It catalyses the reaction Hydrolyzes Xaa-Pro-|- bonds to release unblocked, N-terminal dipeptides from substrates including Ala-Pro-|-p-nitroanilide and (sequentially) Tyr-Pro-|-Phe-Pro-|-Gly-Pro-|-Ile.. In terms of biological role, removes N-terminal dipeptides sequentially from polypeptides having unsubstituted N-termini provided that the penultimate residue is proline. This Streptococcus pyogenes serotype M2 (strain MGAS10270) protein is Xaa-Pro dipeptidyl-peptidase.